A 448-amino-acid chain; its full sequence is Methionine aminopeptidase 2 (448 aa).

Residues 1 to 47 (MTSSVDKVSQKVADVKLGSSKSTKNNKSKGKGKSNKNQVVEDDDEDD) are disordered. Over residues 24-34 (KNNKSKGKGKS) the composition is skewed to basic residues. His-198 contributes to the substrate binding site. A divalent metal cation contacts are provided by Asp-218, Asp-229, and His-298. Substrate is bound at residue His-306. Residues Glu-331 and Glu-429 each contribute to the a divalent metal cation site.

This sequence belongs to the peptidase M24A family. Methionine aminopeptidase eukaryotic type 2 subfamily. Co(2+) serves as cofactor. The cofactor is Zn(2+). It depends on Mn(2+) as a cofactor. Fe(2+) is required as a cofactor.

It is found in the cytoplasm. It catalyses the reaction Release of N-terminal amino acids, preferentially methionine, from peptides and arylamides.. Functionally, cotranslationally removes the N-terminal methionine from nascent proteins. The N-terminal methionine is often cleaved when the second residue in the primary sequence is small and uncharged (Met-Ala-, Cys, Gly, Pro, Ser, Thr, or Val). The chain is Methionine aminopeptidase 2 from Komagataella phaffii (strain GS115 / ATCC 20864) (Yeast).